A 272-amino-acid polypeptide reads, in one-letter code: Lyso-glycine lipid O-acyltransferase (272 aa).

The protein belongs to the O-acyltransferase GlsA family.

It carries out the reaction a lyso-glycine lipid + a fatty acyl-[ACP] = a glycine lipid + holo-[ACP]. The enzyme catalyses N-[(3R)-3-hydroxyhexadecanoyl]-glycine + hexadecanoyl-[ACP] = N-[(3R)-3-(hexadecanoyloxy)hexadecanoyl]-glycine + holo-[ACP]. Its pathway is lipid metabolism. Is involved in the production of glycine lipids (GL), which are phosphorus-free membrane lipids important for fitness during growth of the human gut bacterium B.thetaiotaomicron in vivo and in vitro. Catalyzes the second step of GL biosynthesis, i.e. the O-acylation of the hydroxyl group of lyso-glycine lipids, resulting in the production of the mature diacylated glycine lipids. The protein is Lyso-glycine lipid O-acyltransferase of Bacteroides thetaiotaomicron (strain ATCC 29148 / DSM 2079 / JCM 5827 / CCUG 10774 / NCTC 10582 / VPI-5482 / E50).